Reading from the N-terminus, the 268-residue chain is Indole-3-glycerol phosphate synthase (268 aa).

Belongs to the TrpC family.

It catalyses the reaction 1-(2-carboxyphenylamino)-1-deoxy-D-ribulose 5-phosphate + H(+) = (1S,2R)-1-C-(indol-3-yl)glycerol 3-phosphate + CO2 + H2O. It functions in the pathway amino-acid biosynthesis; L-tryptophan biosynthesis; L-tryptophan from chorismate: step 4/5. The chain is Indole-3-glycerol phosphate synthase from Magnetococcus marinus (strain ATCC BAA-1437 / JCM 17883 / MC-1).